A 1405-amino-acid polypeptide reads, in one-letter code: Sterol 3-beta-glucosyltransferase (1405 aa).

2 stretches are compositionally biased toward basic and acidic residues: residues 1–16 (MRPF…DRKL) and 95–105 (TGQRPRKESSV). 3 disordered regions span residues 1-27 (MRPF…SASR), 83-186 (ARFD…SATP), and 203-230 (DLKA…ASVS). The segment covering 106–115 (RKGTSVSVNT) has biased composition (polar residues). Residues 116-126 (SSLDPSQRSSS) show a composition bias toward low complexity. Residues 206 to 218 (ASSTERSQSSLNE) show a composition bias toward polar residues. A GRAM 1 domain is found at 246–285 (EKVLVEYACSLLQSMLLQGYMYVTEGHICFYAYLPKKSTV). The PH domain maps to 285-384 (VAIKSGYLHK…WVKALQKVIF (100 aa)). 2 disordered regions span residues 461 to 526 (SQHL…DSSD) and 566 to 642 (TIYG…SGAP). A compositionally biased stretch (polar residues) spans 483-493 (RWSLTSGTSRA). Basic and acidic residues predominate over residues 570–589 (LDRRPSGRERRGRRNSDETA). A compositionally biased stretch (polar residues) spans 590–603 (RSPSTRVNVGTGQQ). Residues 606–624 (ELDRRTDGNTSGREARDTT) are compositionally biased toward basic and acidic residues. Over residues 626–642 (ESDQYTQDPTKSFSGAP) the composition is skewed to polar residues. Residues 724-790 (DRFRAHFALP…RDIENVEKEK (67 aa)) enclose the GRAM 2 domain. 10 residues coordinate UDP-alpha-D-glucose: serine 911, arginine 912, aspartate 914, alanine 1214, histidine 1216, histidine 1229, glycine 1233, threonine 1234, aspartate 1253, and glutamine 1254. The interval 1330-1367 (SIASSTPFSPTPSAKTAAEQDADDDVEDSEEWTFVGDD) is disordered. Residues 1332 to 1348 (ASSTPFSPTPSAKTAAE) are compositionally biased toward low complexity. Over residues 1349–1367 (QDADDDVEDSEEWTFVGDD) the composition is skewed to acidic residues.

The protein belongs to the glycosyltransferase 28 family.

It localises to the cytoplasm. The protein localises to the preautophagosomal structure membrane. It carries out the reaction a sterol + UDP-alpha-D-glucose = a sterol 3-beta-D-glucoside + UDP + H(+). The enzyme catalyses ergosterol + UDP-alpha-D-glucose = ergosteryl 3-beta-D-glucoside + UDP + H(+). Sterol glycosyltransferase responsible for the glycosylation of ergosterol to form ergosterol-glucoside. This is Sterol 3-beta-glucosyltransferase from Aspergillus fumigatus (strain ATCC MYA-4609 / CBS 101355 / FGSC A1100 / Af293) (Neosartorya fumigata).